The sequence spans 521 residues: Bifunctional purine biosynthesis protein PurH (521 aa).

The 145-residue stretch at 1–145 (MIKQALISVS…KNHRDVTVVV (145 aa)) folds into the MGS-like domain.

This sequence belongs to the PurH family.

The catalysed reaction is (6R)-10-formyltetrahydrofolate + 5-amino-1-(5-phospho-beta-D-ribosyl)imidazole-4-carboxamide = 5-formamido-1-(5-phospho-D-ribosyl)imidazole-4-carboxamide + (6S)-5,6,7,8-tetrahydrofolate. It catalyses the reaction IMP + H2O = 5-formamido-1-(5-phospho-D-ribosyl)imidazole-4-carboxamide. Its pathway is purine metabolism; IMP biosynthesis via de novo pathway; 5-formamido-1-(5-phospho-D-ribosyl)imidazole-4-carboxamide from 5-amino-1-(5-phospho-D-ribosyl)imidazole-4-carboxamide (10-formyl THF route): step 1/1. It functions in the pathway purine metabolism; IMP biosynthesis via de novo pathway; IMP from 5-formamido-1-(5-phospho-D-ribosyl)imidazole-4-carboxamide: step 1/1. This Burkholderia vietnamiensis (strain G4 / LMG 22486) (Burkholderia cepacia (strain R1808)) protein is Bifunctional purine biosynthesis protein PurH.